The primary structure comprises 76 residues: Alpha/kappa-conotoxin-like pl14.3 (76 aa).

A signal peptide spans M1–P27. Positions A28–R39 are excised as a propeptide. 2 disulfides stabilise this stretch: C46-C61 and C50-C63. Aspartic acid 1-amide is present on D64. The propeptide occupies G65 to V76.

The protein belongs to the conotoxin J superfamily. As to expression, expressed by the venom duct.

It is found in the secreted. In terms of biological role, highly inhibits both nicotinic acetylcholine receptors (neuronal (alpha-3/beta-4) and muscular (alpha-1/beta-1/epsilon/delta) subtypes) and the voltage-gated potassium channel Kv1.6/KCNA6 subtype. The protein is Alpha/kappa-conotoxin-like pl14.3 of Conus planorbis (Planorbis cone).